Reading from the N-terminus, the 427-residue chain is Glutamate-1-semialdehyde 2,1-aminomutase (427 aa).

Residue lysine 265 is modified to N6-(pyridoxal phosphate)lysine.

It belongs to the class-III pyridoxal-phosphate-dependent aminotransferase family. HemL subfamily. In terms of assembly, homodimer. Requires pyridoxal 5'-phosphate as cofactor.

The protein resides in the cytoplasm. It catalyses the reaction (S)-4-amino-5-oxopentanoate = 5-aminolevulinate. The protein operates within porphyrin-containing compound metabolism; protoporphyrin-IX biosynthesis; 5-aminolevulinate from L-glutamyl-tRNA(Glu): step 2/2. The chain is Glutamate-1-semialdehyde 2,1-aminomutase from Burkholderia ambifaria (strain ATCC BAA-244 / DSM 16087 / CCUG 44356 / LMG 19182 / AMMD) (Burkholderia cepacia (strain AMMD)).